We begin with the raw amino-acid sequence, 37 residues long: Photosystem I reaction center subunit VIII (37 aa).

Residues 7 to 27 (LPAIFVPLVGLVFPAIAMVSL) traverse the membrane as a helical segment.

Belongs to the PsaI family.

The protein localises to the plastid. It is found in the chloroplast thylakoid membrane. May help in the organization of the PsaL subunit. In Morus indica (Mulberry), this protein is Photosystem I reaction center subunit VIII.